Consider the following 344-residue polypeptide: Anthranilate phosphoribosyltransferase 2 (344 aa).

Residues G81, 84-85, T89, 91-94, 109-117, and A121 each bind 5-phospho-alpha-D-ribose 1-diphosphate; these read GD, NIST, and KHGNRALSS. Residue G81 coordinates anthranilate. S93 contacts Mg(2+). Anthranilate is bound at residue N112. R167 lines the anthranilate pocket. Positions 226 and 227 each coordinate Mg(2+).

The protein belongs to the anthranilate phosphoribosyltransferase family. Homodimer. Mg(2+) is required as a cofactor.

The enzyme catalyses N-(5-phospho-beta-D-ribosyl)anthranilate + diphosphate = 5-phospho-alpha-D-ribose 1-diphosphate + anthranilate. It participates in amino-acid biosynthesis; L-tryptophan biosynthesis; L-tryptophan from chorismate: step 2/5. In terms of biological role, catalyzes the transfer of the phosphoribosyl group of 5-phosphorylribose-1-pyrophosphate (PRPP) to anthranilate to yield N-(5'-phosphoribosyl)-anthranilate (PRA). The protein is Anthranilate phosphoribosyltransferase 2 of Ralstonia nicotianae (strain ATCC BAA-1114 / GMI1000) (Ralstonia solanacearum).